We begin with the raw amino-acid sequence, 270 residues long: UPF0162 protein VC_2176 (270 aa).

The protein belongs to the UPF0162 family.

The chain is UPF0162 protein VC_2176 from Vibrio cholerae serotype O1 (strain ATCC 39315 / El Tor Inaba N16961).